The primary structure comprises 463 residues: Chaperone SurA (463 aa).

A signal peptide spans 1-25; it reads MTKPFSVVLASLLAITSTVSPLASA. PpiC domains are found at residues 174 to 276 and 289 to 388; these read GSQY…KLVE and VTEY…QRVG. Disordered regions lie at residues 329 to 348 and 431 to 463; these read ATAK…GDLG and YRTG…KPTR. Residues 441 to 450 show a composition bias toward low complexity; that stretch reads ATAAPAKSPD. Over residues 451–463 the composition is skewed to pro residues; that stretch reads PAAPSPPPAKPTR.

Its subcellular location is the periplasm. The enzyme catalyses [protein]-peptidylproline (omega=180) = [protein]-peptidylproline (omega=0). Functionally, chaperone involved in the correct folding and assembly of outer membrane proteins. Recognizes specific patterns of aromatic residues and the orientation of their side chains, which are found more frequently in integral outer membrane proteins. May act in both early periplasmic and late outer membrane-associated steps of protein maturation. The chain is Chaperone SurA from Xanthomonas axonopodis pv. citri (strain 306).